The chain runs to 266 residues: Non-structural maintenance of chromosomes element 1 homolog (266 aa).

The interaction with NSMCE3 stretch occupies residues 1–102 (MQGSTRRMGV…SISKMATDFA (102 aa)). An RING-type; atypical zinc finger spans residues 191 to 232 (CNICHSLLIQGQSCETCGIRMHLPCVAKYFQSNAEPRCPHCN). Residues 246–266 (EKERESGVLKSNKKSLRSRQH) form a disordered region. Serine 251 bears the Phosphoserine mark. The span at 256 to 266 (SNKKSLRSRQH) shows a compositional bias: basic residues.

Belongs to the NSE1 family. In terms of assembly, component of the SMC5-SMC6 complex which consists at least of SMC5, SMC6, NSMCE2, NSMCE1, NSMCE4A or EID3 and NSMCE3. NSMCE1, NSMCE4A or EID3 and NSMCE3 probably form a subcomplex that bridges the head domains of the SMC5-SMC6 heterodimer. Interacts with NSMCE3. Interacts with MAGEF1. Post-translationally, ubiquitinated.

The protein localises to the nucleus. The protein resides in the chromosome. It is found in the telomere. The catalysed reaction is S-ubiquitinyl-[E2 ubiquitin-conjugating enzyme]-L-cysteine + [acceptor protein]-L-lysine = [E2 ubiquitin-conjugating enzyme]-L-cysteine + N(6)-ubiquitinyl-[acceptor protein]-L-lysine.. Functionally, RING-type zinc finger-containing E3 ubiquitin ligase that assembles with melanoma antigen protein (MAGE) to catalyze the direct transfer of ubiquitin from E2 ubiquitin-conjugating enzyme to a specific substrate. Within MAGE-RING ubiquitin ligase complex, MAGE stimulates and specifies ubiquitin ligase activity likely through recruitment and/or stabilization of the E2 ubiquitin-conjugating enzyme at the E3:substrate complex. Involved in maintenance of genome integrity, DNA damage response and DNA repair. NSMCE3/MAGEG1 and NSMCE1 ubiquitin ligase are components of SMC5-SMC6 complex and may positively regulate homologous recombination-mediated DNA repair. MAGEF1-NSMCE1 ubiquitin ligase promotes proteasomal degradation of MMS19, a key component of the cytosolic iron-sulfur protein assembly (CIA) machinery. Down-regulation of MMS19 impairs the activity of several DNA repair and metabolism enzymes such as ERCC2/XPD, FANCJ, RTEL1 and POLD1 that require iron-sulfur clusters as cofactors. This chain is Non-structural maintenance of chromosomes element 1 homolog, found in Homo sapiens (Human).